Here is a 335-residue protein sequence, read N- to C-terminus: Nucleoid-associated protein CKO_00588 (335 aa).

The protein belongs to the YejK family.

Its subcellular location is the cytoplasm. It localises to the nucleoid. The sequence is that of Nucleoid-associated protein CKO_00588 from Citrobacter koseri (strain ATCC BAA-895 / CDC 4225-83 / SGSC4696).